The following is a 197-amino-acid chain: Dephospho-CoA kinase (197 aa).

In terms of domain architecture, DPCK spans 3 to 197 (VYGLTGGIGS…QSLLHTHQNT (195 aa)). 11-16 (GSGKTT) provides a ligand contact to ATP.

The protein belongs to the CoaE family.

It localises to the cytoplasm. The catalysed reaction is 3'-dephospho-CoA + ATP = ADP + CoA + H(+). The protein operates within cofactor biosynthesis; coenzyme A biosynthesis; CoA from (R)-pantothenate: step 5/5. Catalyzes the phosphorylation of the 3'-hydroxyl group of dephosphocoenzyme A to form coenzyme A. The polypeptide is Dephospho-CoA kinase (Hydrogenovibrio crunogenus (strain DSM 25203 / XCL-2) (Thiomicrospira crunogena)).